The chain runs to 60 residues: Anionic antimicrobial peptide 2 (60 aa).

In terms of tissue distribution, hemolymph.

It is found in the secreted. Its function is as follows. Antimicrobial protein. Has antibacterial activity against the Gram-positive bacteria M.luteus (MIC=86.6 uM), L.monocytogenes (MIC=86.6 uM), and S.lutea (MIC=86.6 uM). Lacks antibacterial activity against the Gram-positive bacteria B.circulans and S.aureus, and the Gram-negative bacteria E.coli D31, E.coli ATCC 25922, and S.typhimurium. Has antifungal activity against P.pastoris (MIC=86.6 uM) and P.stipitis (MIC=90.9 uM), but lacks antifungal activity against A.niger, C.albicans, C.albidus, C.fructus, C.wickerhamii, F.oxysporum, S.cerevisiae, S.pombe, T.harzianum, and Z.marxianus. The sequence is that of Anionic antimicrobial peptide 2 from Galleria mellonella (Greater wax moth).